Reading from the N-terminus, the 170-residue chain is Adenine phosphoribosyltransferase (170 aa).

This sequence belongs to the purine/pyrimidine phosphoribosyltransferase family. As to quaternary structure, homodimer.

It is found in the cytoplasm. The enzyme catalyses AMP + diphosphate = 5-phospho-alpha-D-ribose 1-diphosphate + adenine. It functions in the pathway purine metabolism; AMP biosynthesis via salvage pathway; AMP from adenine: step 1/1. Catalyzes a salvage reaction resulting in the formation of AMP, that is energically less costly than de novo synthesis. This is Adenine phosphoribosyltransferase from Mycoplasmopsis agalactiae (strain NCTC 10123 / CIP 59.7 / PG2) (Mycoplasma agalactiae).